We begin with the raw amino-acid sequence, 273 residues long: Dermonecrotic toxin LsaSicTox-alphaIB1bi (273 aa).

His-5 is an active-site residue. Glu-25 and Asp-27 together coordinate Mg(2+). Catalysis depends on His-41, which acts as the Nucleophile. Cystine bridges form between Cys-45–Cys-51 and Cys-47–Cys-190. Position 85 (Asp-85) interacts with Mg(2+).

This sequence belongs to the arthropod phospholipase D family. Class II subfamily. Requires Mg(2+) as cofactor. As to expression, expressed by the venom gland.

Its subcellular location is the secreted. It carries out the reaction an N-(acyl)-sphingosylphosphocholine = an N-(acyl)-sphingosyl-1,3-cyclic phosphate + choline. It catalyses the reaction an N-(acyl)-sphingosylphosphoethanolamine = an N-(acyl)-sphingosyl-1,3-cyclic phosphate + ethanolamine. The enzyme catalyses a 1-acyl-sn-glycero-3-phosphocholine = a 1-acyl-sn-glycero-2,3-cyclic phosphate + choline. The catalysed reaction is a 1-acyl-sn-glycero-3-phosphoethanolamine = a 1-acyl-sn-glycero-2,3-cyclic phosphate + ethanolamine. In terms of biological role, dermonecrotic toxins cleave the phosphodiester linkage between the phosphate and headgroup of certain phospholipids (sphingolipid and lysolipid substrates), forming an alcohol (often choline) and a cyclic phosphate. This toxin acts on sphingomyelin (SM). It may also act on ceramide phosphoethanolamine (CPE), lysophosphatidylcholine (LPC) and lysophosphatidylethanolamine (LPE), but not on lysophosphatidylserine (LPS), and lysophosphatidylglycerol (LPG). It acts by transphosphatidylation, releasing exclusively cyclic phosphate products as second products. Induces dermonecrosis, hemolysis, increased vascular permeability, edema, inflammatory response, and platelet aggregation. The polypeptide is Dermonecrotic toxin LsaSicTox-alphaIB1bi (Loxosceles sabina (Tucson recluse spider)).